Consider the following 220-residue polypeptide: Antistasin (220 aa).

The first 19 residues, 1–19, serve as a signal peptide directing secretion; sequence MNYLFVFLALSAAVTFANA. 6 consecutive Antistasin-like domains span residues 21–46, 54–79, 91–117, 120–145, 154–180, and 183–208; these read CNKI…ICKC, CSNR…ICRC, CDGL…KCEC, CKQF…TCKC, CDDL…KCEC, and CKNF…TCKC.

This sequence belongs to the protease inhibitor I15 (antistasin) family. Gland cells. It is more strongly expressed in the head than in the gastric tissue.

It is found in the secreted. Its function is as follows. This highly disulfide-bonded protein is a potent inhibitor of factor Xa. Facilitates digestion of tissues and may also protect the gastric tissues from its own digestive enzymes. May have therapeutic utility as an anticoagulant. Also exhibits a strong metastatic activity. The protein is Antistasin of Hydra vulgaris (Hydra).